The chain runs to 132 residues: Dormancy-associated protein 1 (132 aa).

Residues Met-53–Val-76 are disordered. Residues Thr-61–Thr-70 show a composition bias toward low complexity. The residue at position 64 (Thr-64) is a Phosphothreonine.

The protein belongs to the DRM1/ARP family. In terms of tissue distribution, isoform 1: Expressed mainly in the low bolt. Isoform 2: Expressed mainly in the low bolt. Detected in flowers. Isoform 4: Expressed mainly in the low bolt. Isoform 5: Expressed mainly in the 6 days old seedlings. Detected in 16 days old seedlings, axil, low bolt and floral samples, but only barely in leaves and top bolt.

This is Dormancy-associated protein 1 from Arabidopsis thaliana (Mouse-ear cress).